We begin with the raw amino-acid sequence, 185 residues long: Bcl-2-modifying factor (185 aa).

Positions 1–28 (MEPPQCVEELEDDVFQSEDGEPGTQPGG) are disordered. The segment covering 8–21 (EELEDDVFQSEDGE) has biased composition (acidic residues). Residues 67–75 (DKATQTLSP) are interaction with DLC2. The BH3 motif lies at 134–148 (IARKLQCIADQFHRL).

This sequence belongs to the Bcl-2 family. As to quaternary structure, interacts with MCL1, BCL2, BCL2L1/BCL-Xl, BCL2A1 and BCL2L2/BCL-w. Interacts with the myosin V actin motor complex through its binding to DLC2. Widely expressed with an abundant expression in pancreas, liver kidney and hematopoietic tissues.

In terms of biological role, may play a role in apoptosis. This chain is Bcl-2-modifying factor (Bmf), found in Mus musculus (Mouse).